A 366-amino-acid polypeptide reads, in one-letter code: Phosphoserine aminotransferase (366 aa).

Position 42 (Arg-42) interacts with L-glutamate. Residues 76 to 77 (AT), Trp-101, Thr-156, Asp-178, and Gln-201 contribute to the pyridoxal 5'-phosphate site. Lys-202 is subject to N6-(pyridoxal phosphate)lysine. 243–244 (NT) is a binding site for pyridoxal 5'-phosphate.

It belongs to the class-V pyridoxal-phosphate-dependent aminotransferase family. SerC subfamily. As to quaternary structure, homodimer. The cofactor is pyridoxal 5'-phosphate.

It is found in the cytoplasm. The catalysed reaction is O-phospho-L-serine + 2-oxoglutarate = 3-phosphooxypyruvate + L-glutamate. It carries out the reaction 4-(phosphooxy)-L-threonine + 2-oxoglutarate = (R)-3-hydroxy-2-oxo-4-phosphooxybutanoate + L-glutamate. Its pathway is amino-acid biosynthesis; L-serine biosynthesis; L-serine from 3-phospho-D-glycerate: step 2/3. It functions in the pathway cofactor biosynthesis; pyridoxine 5'-phosphate biosynthesis; pyridoxine 5'-phosphate from D-erythrose 4-phosphate: step 3/5. Functionally, catalyzes the reversible conversion of 3-phosphohydroxypyruvate to phosphoserine and of 3-hydroxy-2-oxo-4-phosphonooxybutanoate to phosphohydroxythreonine. In Aromatoleum aromaticum (strain DSM 19018 / LMG 30748 / EbN1) (Azoarcus sp. (strain EbN1)), this protein is Phosphoserine aminotransferase.